We begin with the raw amino-acid sequence, 416 residues long: Gamma-glutamyl phosphate reductase (416 aa).

The protein belongs to the gamma-glutamyl phosphate reductase family.

It is found in the cytoplasm. The enzyme catalyses L-glutamate 5-semialdehyde + phosphate + NADP(+) = L-glutamyl 5-phosphate + NADPH + H(+). It functions in the pathway amino-acid biosynthesis; L-proline biosynthesis; L-glutamate 5-semialdehyde from L-glutamate: step 2/2. Functionally, catalyzes the NADPH-dependent reduction of L-glutamate 5-phosphate into L-glutamate 5-semialdehyde and phosphate. The product spontaneously undergoes cyclization to form 1-pyrroline-5-carboxylate. This chain is Gamma-glutamyl phosphate reductase, found in Leptospira interrogans serogroup Icterohaemorrhagiae serovar copenhageni (strain Fiocruz L1-130).